Reading from the N-terminus, the 172-residue chain is Large ribosomal subunit protein uL10 (172 aa).

Belongs to the universal ribosomal protein uL10 family. In terms of assembly, part of the ribosomal stalk of the 50S ribosomal subunit. The N-terminus interacts with L11 and the large rRNA to form the base of the stalk. The C-terminus forms an elongated spine to which L12 dimers bind in a sequential fashion forming a multimeric L10(L12)X complex.

In terms of biological role, forms part of the ribosomal stalk, playing a central role in the interaction of the ribosome with GTP-bound translation factors. The polypeptide is Large ribosomal subunit protein uL10 (Chlorobium limicola (strain DSM 245 / NBRC 103803 / 6330)).